The following is a 118-amino-acid chain: V-type proton ATPase subunit G 1 (118 aa).

Ala2 carries the post-translational modification N-acetylalanine.

Belongs to the V-ATPase G subunit family. In terms of assembly, V-ATPase is a heteromultimeric enzyme made up of two complexes: the ATP-hydrolytic V1 complex and the proton translocation V0 complex. The V1 complex consists of three catalytic AB heterodimers that form a heterohexamer, three peripheral stalks each consisting of EG heterodimers, one central rotor including subunits D and F, and the regulatory subunits C and H. The proton translocation complex V0 consists of the proton transport subunit a, a ring of proteolipid subunits c9c'', rotary subunit d, subunits e and f, and the accessory subunits ATP6AP1/Ac45 and ATP6AP2/PRR. Kidney; localizes to early distal nephron, encompassing thick ascending limbs and distal convoluted tubules (at protein level). Ubiquitous.

The protein resides in the apical cell membrane. In terms of biological role, subunit of the V1 complex of vacuolar(H+)-ATPase (V-ATPase), a multisubunit enzyme composed of a peripheral complex (V1) that hydrolyzes ATP and a membrane integral complex (V0) that translocates protons. V-ATPase is responsible for acidifying and maintaining the pH of intracellular compartments and in some cell types, is targeted to the plasma membrane, where it is responsible for acidifying the extracellular environment. In aerobic conditions, involved in intracellular iron homeostasis, thus triggering the activity of Fe(2+) prolyl hydroxylase (PHD) enzymes, and leading to HIF1A hydroxylation and subsequent proteasomal degradation. The polypeptide is V-type proton ATPase subunit G 1 (ATP6V1G1) (Homo sapiens (Human)).